The following is a 98-amino-acid chain: U1-theraphotoxin-Ap1a (98 aa).

An N-terminal signal peptide occupies residues Met1 to Ala23. A propeptide spanning residues Glu24 to Arg50 is cleaved from the precursor. 3 disulfides stabilise this stretch: Cys54–Cys84, Cys58–Cys90, and Cys72–Cys95. A disordered region spans residues Asp63 to Cys84.

The protein belongs to the neurotoxin 12 (Hwtx-2) family. 01 (Ap1a) subfamily. As to expression, expressed by the venom gland.

Its subcellular location is the secreted. Functionally, is toxic to both insects and mammals. Induces reversible paralysis when injected into S.frugiperda larvae. Reduces both the amplitude and frequency of responses from muscle (GF-TTM and GF-DLM) pathways in the D.melanogaster giant fiber circuit, suggesting an action at the neuromuscular junction, which is mediated by glutamatergic receptors. In mice, intracranial injection of 30 ug causes increased urination, myoclonus, hypermotility with circular movements followed by respiratory and generalized seizures resulting in death within 25-35 minutes of injection. The polypeptide is U1-theraphotoxin-Ap1a (Acanthoscurria paulensis (Brazilian giant black tarantula spider)).